We begin with the raw amino-acid sequence, 217 residues long: L-lactate dehydrogenase B chain (217 aa).

Asn22 contacts NAD(+). Substrate contacts are provided by Asn22 and Arg53. The active-site Proton acceptor is His77. At Tyr123 the chain carries Phosphotyrosine. Thr132 serves as a coordination point for substrate. N6-acetyllysine is present on Lys212.

It belongs to the LDH/MDH superfamily. LDH family. In terms of assembly, homotetramer. Interacts with PTEN upstream reading frame protein MP31; the interaction leads to inhibition of mitochondrial lactate dehydrogenase activity, preventing conversion of lactate to pyruvate in mitochondria.

The protein resides in the cytoplasm. Its subcellular location is the mitochondrion inner membrane. The catalysed reaction is (S)-lactate + NAD(+) = pyruvate + NADH + H(+). It participates in fermentation; pyruvate fermentation to lactate; (S)-lactate from pyruvate: step 1/1. Interconverts simultaneously and stereospecifically pyruvate and lactate with concomitant interconversion of NADH and NAD(+). The polypeptide is L-lactate dehydrogenase B chain (LDHB) (Oryctolagus cuniculus (Rabbit)).